Reading from the N-terminus, the 205-residue chain is Thymidine kinase (205 aa).

ATP-binding positions include 9 to 16 (SAMNAGKS) and 87 to 90 (DESQ). Glutamate 88 functions as the Proton acceptor in the catalytic mechanism. Cysteine 145, cysteine 147, cysteine 182, and histidine 185 together coordinate Zn(2+).

Belongs to the thymidine kinase family. Homotetramer.

It localises to the cytoplasm. The catalysed reaction is thymidine + ATP = dTMP + ADP + H(+). The chain is Thymidine kinase from Salmonella paratyphi A (strain ATCC 9150 / SARB42).